The primary structure comprises 408 residues: MTNQTVRGTKDLLFDEWYKFKYIEQTANRISSLYGFLPAQTPIFECTEVFTKTLGDSSDIITKEMYSFNDKGGKSITLRPEFTAAIVRLLIEKKLQTPIKLFSTGPAFRYERPQKGRQRQFHQINFEVFGIEDPKADIELISLAQHLLTEFGINKNVKLEINSLGDGETITKYREALILYFTKYQNDLSEDSKNRLIKNPLRILDSKDEKDKSIISDAPKISNYYTKESSDFFEQILNGLTILDIPYTVNNKLVRGLDYYCHTVFEFVTEDLGAQGAVFAGGRYDNLVSSVGGKHTPAIGFAGGIERIMELINYSPKEERPIYLIPIGREAEKHALTLANELRRNGLYVIYEYSGTLRTRMKKANQANAKAALIFGDEELSSKTLKIKNMDTGEEKIIARDNTIENIY.

It belongs to the class-II aminoacyl-tRNA synthetase family. As to quaternary structure, homodimer.

The protein resides in the cytoplasm. The enzyme catalyses tRNA(His) + L-histidine + ATP = L-histidyl-tRNA(His) + AMP + diphosphate + H(+). In Wolbachia pipientis wMel, this protein is Histidine--tRNA ligase.